We begin with the raw amino-acid sequence, 153 residues long: Ribosomal RNA large subunit methyltransferase H (153 aa).

Residues Leu63, Gly102, and 121-126 (FGKITL) each bind S-adenosyl-L-methionine.

Belongs to the RNA methyltransferase RlmH family. Homodimer.

The protein resides in the cytoplasm. The enzyme catalyses pseudouridine(1915) in 23S rRNA + S-adenosyl-L-methionine = N(3)-methylpseudouridine(1915) in 23S rRNA + S-adenosyl-L-homocysteine + H(+). In terms of biological role, specifically methylates the pseudouridine at position 1915 (m3Psi1915) in 23S rRNA. This chain is Ribosomal RNA large subunit methyltransferase H, found in Sulfurovum sp. (strain NBC37-1).